The sequence spans 359 residues: MSKVCIIGTTTWGITLGTVIAHKGREVMLWARTEDEAALLSAQRRPADFLPEDYYFPEYLNVTASLEEALSGADMVLMAVPSQRMRPNIRLAAPLLTKNMLVCSASKGLEIGTAKRMSQVIADEISPDFSQNICVLSGPNLAMEILKGLPAVTVLAADTEKTAKKAAKLVTASNFCAYTNTDIIGVELGGSLKNIIALGAGIADGLSFGNNAKSALITRGLTEISALGAALGANPLTFSGLAGLGDLIATCSSNLSRNHFVGVELTKGRSLNDIMYSMSNVAEGVSTTAVAYELARSMDLEMPVTENIYNVLYNNADPKEAARKLMAAQAAHELAGRKWDLFKMFRRRRTRKTPELNPD.

The NADPH site is built by T11, W12, R32, and K107. Residues K107 and G138 each coordinate sn-glycerol 3-phosphate. Residue A142 participates in NADPH binding. Residues K193, D246, S256, R257, and N258 each contribute to the sn-glycerol 3-phosphate site. Residue K193 is the Proton acceptor of the active site. An NADPH-binding site is contributed by R257. Residues V281 and E283 each coordinate NADPH.

This sequence belongs to the NAD-dependent glycerol-3-phosphate dehydrogenase family.

The protein resides in the cytoplasm. The enzyme catalyses sn-glycerol 3-phosphate + NAD(+) = dihydroxyacetone phosphate + NADH + H(+). The catalysed reaction is sn-glycerol 3-phosphate + NADP(+) = dihydroxyacetone phosphate + NADPH + H(+). Its pathway is membrane lipid metabolism; glycerophospholipid metabolism. Functionally, catalyzes the reduction of the glycolytic intermediate dihydroxyacetone phosphate (DHAP) to sn-glycerol 3-phosphate (G3P), the key precursor for phospholipid synthesis. The chain is Glycerol-3-phosphate dehydrogenase [NAD(P)+] from Dehalococcoides mccartyi (strain ATCC BAA-2266 / KCTC 15142 / 195) (Dehalococcoides ethenogenes (strain 195)).